We begin with the raw amino-acid sequence, 347 residues long: Endophilin-A3 (347 aa).

Residues 1 to 21 are membrane-binding amphipathic helix; that stretch reads MSVAGLKKQFHKASQLFSEKI. Residues 18–249 enclose the BAR domain; the sequence is SEKISGAEGT…LELRISLASK (232 aa). Residues 60–87 form a required for dimerization upon membrane association region; that stretch reads PNPAYRAKLGMLNTVSKLRGQVKATGYP. A coiled-coil region spans residues 180–201; that stretch reads EEEIRQAVEKFEESKELAERSM. The interaction with ARC stretch occupies residues 218-254; it reads FVEAALDYHRQSTEILQELQSKLELRISLASKVPKRE. Residues 255–288 form a disordered region; sequence FMPKPVNMSSTDANGVGPSSSSKTPGTDTPADQP. Residues 261 to 281 are compositionally biased toward polar residues; it reads NMSSTDANGVGPSSSSKTPGT. The SH3 domain occupies 285–344; that stretch reads ADQPCCRGLYDFEPENEGELGFKEGDIITLTNQIDENWYEGMLRGESGFFPINYVEVIVP.

It belongs to the endophilin family. In terms of assembly, interacts with ARC, DNM1, SGIP1, SYNJ1 and DYDC1. Interacts with FASLG. Interacts with ATXN2. Interacts with BIN2.

It is found in the cytoplasm. It localises to the early endosome membrane. Functionally, implicated in endocytosis. May recruit other proteins to membranes with high curvature. This Mus musculus (Mouse) protein is Endophilin-A3 (Sh3gl3).